The chain runs to 732 residues: Interleukin-31 receptor subunit alpha (732 aa).

Residues M1–A19 form the signal peptide. The Extracellular portion of the chain corresponds to A20–E519. Fibronectin type-III domains lie at K24 to T122, P124 to E225, E223 to T315, P319 to A416, and P421 to F515. N-linked (GlcNAc...) asparagine glycosylation is found at N37, N67, N93, N166, N187, N277, N283, N395, N455, and N504. The chain crosses the membrane as a helical span at residues I520–A540. Residues Y541–V732 lie on the Cytoplasmic side of the membrane.

This sequence belongs to the type I cytokine receptor family. Type 2 subfamily. As to quaternary structure, heterodimer with OSMR. Interacts with JAK1 and STAT3. Post-translationally, N-glycosylated. Expressed in CD14- and CD56-positive blood cells. Expressed in macrophages. Expressed in keratinocytes. Expressed in a subset of dorsal root ganglia neurons (at protein level). Expressed at low levels in testis, ovary, brain, prostate, placenta, thymus, bone marrow, trachea and skin. Expressed in bronchial and alveolar epithelial cells and pulmonary fibroblasts. Detected in all of the myelomonocytic lineage. Isoform 6: Expressed at higher levels in lesional skin compared to healthy skin of atopic dermatitis patients.

The protein localises to the cell membrane. It is found in the presynaptic cell membrane. The protein resides in the cell projection. Its subcellular location is the axon. Its function is as follows. Associates with OSMR to form the interleukin-31 receptor which activates STAT3 and to a lower extent STAT1 and STAT5. May function in skin immunity. Mediates IL31-induced itch, probably in a manner dependent on cation channels TRPA1 and TRPV1. Positively regulates numbers and cycling status of immature subsets of myeloid progenitor cells in bone marrow in vivo and enhances myeloid progenitor cell survival in vitro. The sequence is that of Interleukin-31 receptor subunit alpha (IL31RA) from Homo sapiens (Human).